The primary structure comprises 340 residues: Phosphoribosylformylglycinamidine cyclo-ligase (340 aa).

The protein belongs to the AIR synthase family.

Its subcellular location is the cytoplasm. It catalyses the reaction 2-formamido-N(1)-(5-O-phospho-beta-D-ribosyl)acetamidine + ATP = 5-amino-1-(5-phospho-beta-D-ribosyl)imidazole + ADP + phosphate + H(+). Its pathway is purine metabolism; IMP biosynthesis via de novo pathway; 5-amino-1-(5-phospho-D-ribosyl)imidazole from N(2)-formyl-N(1)-(5-phospho-D-ribosyl)glycinamide: step 2/2. The sequence is that of Phosphoribosylformylglycinamidine cyclo-ligase from Streptococcus pneumoniae (strain CGSP14).